Consider the following 495-residue polypeptide: Lysine--tRNA ligase (495 aa).

Mg(2+) is bound by residues Glu-406 and Glu-413.

Belongs to the class-II aminoacyl-tRNA synthetase family. In terms of assembly, homodimer. The cofactor is Mg(2+).

Its subcellular location is the cytoplasm. The enzyme catalyses tRNA(Lys) + L-lysine + ATP = L-lysyl-tRNA(Lys) + AMP + diphosphate. This Staphylococcus aureus (strain COL) protein is Lysine--tRNA ligase.